Here is a 250-residue protein sequence, read N- to C-terminus: Endomucin (250 aa).

The N-terminal stretch at 1–20 is a signal peptide; that stretch reads MRLLQVTALFFLLSNSLCRG. Composition is skewed to low complexity over residues 24-38 and 45-60; these read KALTETSTTKASATT and TNKSTGGTPPKGTTNS. Disordered stretches follow at residues 24 to 83 and 105 to 153; these read KALT…ETTT and NAVS…LTTA. N-linked (GlcNAc...) asparagine glycosylation is found at Asn-46, Asn-115, and Asn-119. Polar residues-rich tracts occupy residues 105-135 and 143-153; these read NAVSTLSSPQNKTENQSSIRTTEISGTNQLP and TETPSASLTTA. The helical transmembrane segment at 180 to 200 threads the bilayer; sequence VILPVVIALIVITVLVFTLVG. Positions 210 to 250 are disordered; it reads PGTPESGNDQPQSDKESVKLLTVKTISHESGEHSAQGKAKN. Ser-226 carries the post-translational modification Phosphoserine.

Post-translationally, highly O-glycosylated. Sialic acid-rich glycoprotein.

Its subcellular location is the membrane. Functionally, endothelial sialomucin, also called endomucin or mucin-like sialoglycoprotein, which interferes with the assembly of focal adhesion complexes and inhibits interaction between cells and the extracellular matrix. The sequence is that of Endomucin (Emcn) from Rattus norvegicus (Rat).